A 232-amino-acid polypeptide reads, in one-letter code: Ubiquinone biosynthesis O-methyltransferase (232 aa).

4 residues coordinate S-adenosyl-L-methionine: Arg-36, Gly-55, Asp-76, and Met-120.

It belongs to the methyltransferase superfamily. UbiG/COQ3 family.

It catalyses the reaction a 3-demethylubiquinol + S-adenosyl-L-methionine = a ubiquinol + S-adenosyl-L-homocysteine + H(+). The catalysed reaction is a 3-(all-trans-polyprenyl)benzene-1,2-diol + S-adenosyl-L-methionine = a 2-methoxy-6-(all-trans-polyprenyl)phenol + S-adenosyl-L-homocysteine + H(+). Its pathway is cofactor biosynthesis; ubiquinone biosynthesis. O-methyltransferase that catalyzes the 2 O-methylation steps in the ubiquinone biosynthetic pathway. The polypeptide is Ubiquinone biosynthesis O-methyltransferase (Burkholderia lata (strain ATCC 17760 / DSM 23089 / LMG 22485 / NCIMB 9086 / R18194 / 383)).